We begin with the raw amino-acid sequence, 1038 residues long: Ribosome quality control complex subunit 2 (1038 aa).

Residues 350 to 383 adopt a coiled-coil conformation; sequence ALRIQNQESQAQKKIDDARAENDRKIQALLDVQE. Disordered regions lie at residues 459–499, 708–824, and 877–898; these read LNTS…MKRK, KTSG…DEPG, and QRKK…KREK. Residues 713 to 768 are a coiled coil; sequence EDNGDDDEEEEEEEEEEEEEEEEEEEEEEEEKEEEEKEEEQQQDEDDSNEVNGLEK. The span at 714 to 761 shows a compositional bias: acidic residues; sequence DNGDDDEEEEEEEEEEEEEEEEEEEEEEEEKEEEEKEEEQQQDEDDSN. Positions 780–794 are enriched in basic and acidic residues; that stretch reads SFEHDNLEKDIEKHC. The span at 795 to 805 shows a compositional bias: polar residues; the sequence is TISSDTDSDSG. Position 797 is a phosphoserine (Ser-797). Residues 830-912 adopt a coiled-coil conformation; it reads IENINSNVRG…QALKFTKKEK (83 aa). The segment covering 877 to 894 has biased composition (basic and acidic residues); the sequence is QRKKEEIMKREVREDRKN.

It belongs to the NEMF family. Component of the ribosome quality control complex (RQC), composed of the E3 ubiquitin ligase RKR1/LTN1, RQC1 and RQC2, as well as CDC48 and its ubiquitin-binding cofactors associated with the 60S ribosomal subunit. RQC2 binds to the 40S-binding surface of tRNAs.

Its subcellular location is the cytoplasm. Its function is as follows. Key component of the ribosome quality control complex (RQC), a ribosome-associated complex that mediates the extraction of incompletely synthesized nascent chains from stalled ribosomes as well as their ubiquitin-mediated proteasomal degradation. Thereby, frees 60S subunit ribosomes from the stalled translation complex and prevents the accumulation of nascent polypeptide chains that are potentially toxic for the cell. Within the RQC complex, RQC2 specifically binds stalled 60S ribosomal subunits by recognizing an exposed, nascent chain-conjugated tRNA moiety and promotes the recruitment of RKR1/LTN1 to stalled 60S subunits. Following binding to stalled 60S ribosomal subunits, RQC2 mediates CAT tailing by recruiting alanine- and threonine-charged tRNA to the A-site and directing the elongation of stalled nascent chains independently of mRNA or 40S subunits, leading to non-templated C-terminal Ala and Thr extensions (CAT tails). CAT tails promote the RKR1/LTN1-mediated ubiquitination of incompletely synthesized nascent polypeptides: CAT tailing facilitates RKR1/LTN1-dependent ubiquitination by exposing lysine residues that would otherwise remain buried in the ribosomal exit tunnel. Following ubiquitination, incompletely synthesized nascent polypeptides are recognized by CDC48 and degraded by the proteasome. CAT-tailed proteins tend to aggregate and sequester chaperones and can induce proteotoxic stress; their RKR1/LTN1-dependent ubiquitination and degradation is required to prevent proteotoxic stress. This is Ribosome quality control complex subunit 2 from Saccharomyces cerevisiae (strain ATCC 204508 / S288c) (Baker's yeast).